A 394-amino-acid chain; its full sequence is 1-deoxy-D-xylulose 5-phosphate reductoisomerase (394 aa).

5 residues coordinate NADPH: threonine 13, glycine 14, serine 15, isoleucine 16, and asparagine 127. Lysine 128 lines the 1-deoxy-D-xylulose 5-phosphate pocket. Glutamate 129 lines the NADPH pocket. Aspartate 153 contributes to the Mn(2+) binding site. 1-deoxy-D-xylulose 5-phosphate contacts are provided by serine 154, glutamate 155, serine 184, and histidine 207. Glutamate 155 lines the Mn(2+) pocket. Glycine 213 is an NADPH binding site. Residues serine 220, asparagine 225, lysine 226, and glutamate 229 each coordinate 1-deoxy-D-xylulose 5-phosphate. Glutamate 229 is a Mn(2+) binding site.

Belongs to the DXR family. Requires Mg(2+) as cofactor. It depends on Mn(2+) as a cofactor.

It catalyses the reaction 2-C-methyl-D-erythritol 4-phosphate + NADP(+) = 1-deoxy-D-xylulose 5-phosphate + NADPH + H(+). Its pathway is isoprenoid biosynthesis; isopentenyl diphosphate biosynthesis via DXP pathway; isopentenyl diphosphate from 1-deoxy-D-xylulose 5-phosphate: step 1/6. Its function is as follows. Catalyzes the NADPH-dependent rearrangement and reduction of 1-deoxy-D-xylulose-5-phosphate (DXP) to 2-C-methyl-D-erythritol 4-phosphate (MEP). This Ectopseudomonas mendocina (strain ymp) (Pseudomonas mendocina) protein is 1-deoxy-D-xylulose 5-phosphate reductoisomerase.